Reading from the N-terminus, the 376-residue chain is Queuine tRNA-ribosyltransferase (376 aa).

The active-site Proton acceptor is the Asp89. Substrate contacts are provided by residues 89-93, Asp143, Gln194, and Gly221; that span reads DSGGF. The RNA binding stretch occupies residues 252-258; that stretch reads GVGLPSN. Asp271 serves as the catalytic Nucleophile. Residues 276-280 form an RNA binding; important for wobble base 34 recognition region; it reads ARNGR. Residues Cys309, Cys311, Cys314, and His340 each contribute to the Zn(2+) site.

This sequence belongs to the queuine tRNA-ribosyltransferase family. As to quaternary structure, homodimer. Within each dimer, one monomer is responsible for RNA recognition and catalysis, while the other monomer binds to the replacement base PreQ1. It depends on Zn(2+) as a cofactor.

It carries out the reaction 7-aminomethyl-7-carbaguanine + guanosine(34) in tRNA = 7-aminomethyl-7-carbaguanosine(34) in tRNA + guanine. The protein operates within tRNA modification; tRNA-queuosine biosynthesis. In terms of biological role, catalyzes the base-exchange of a guanine (G) residue with the queuine precursor 7-aminomethyl-7-deazaguanine (PreQ1) at position 34 (anticodon wobble position) in tRNAs with GU(N) anticodons (tRNA-Asp, -Asn, -His and -Tyr). Catalysis occurs through a double-displacement mechanism. The nucleophile active site attacks the C1' of nucleotide 34 to detach the guanine base from the RNA, forming a covalent enzyme-RNA intermediate. The proton acceptor active site deprotonates the incoming PreQ1, allowing a nucleophilic attack on the C1' of the ribose to form the product. After dissociation, two additional enzymatic reactions on the tRNA convert PreQ1 to queuine (Q), resulting in the hypermodified nucleoside queuosine (7-(((4,5-cis-dihydroxy-2-cyclopenten-1-yl)amino)methyl)-7-deazaguanosine). This chain is Queuine tRNA-ribosyltransferase, found in Clostridium tetani (strain Massachusetts / E88).